A 214-amino-acid chain; its full sequence is Thymidylate kinase (214 aa).

10 to 17 (GGEGAGKS) provides a ligand contact to ATP.

Belongs to the thymidylate kinase family.

It catalyses the reaction dTMP + ATP = dTDP + ADP. Functionally, phosphorylation of dTMP to form dTDP in both de novo and salvage pathways of dTTP synthesis. This chain is Thymidylate kinase, found in Brucella abortus (strain S19).